The sequence spans 755 residues: 1,4-alpha-glucan branching enzyme GlgB (755 aa).

Aspartate 435 (nucleophile) is an active-site residue. The active-site Proton donor is glutamate 488.

Belongs to the glycosyl hydrolase 13 family. GlgB subfamily. As to quaternary structure, monomer.

It catalyses the reaction Transfers a segment of a (1-&gt;4)-alpha-D-glucan chain to a primary hydroxy group in a similar glucan chain.. It functions in the pathway glycan biosynthesis; glycogen biosynthesis. In terms of biological role, catalyzes the formation of the alpha-1,6-glucosidic linkages in glycogen by scission of a 1,4-alpha-linked oligosaccharide from growing alpha-1,4-glucan chains and the subsequent attachment of the oligosaccharide to the alpha-1,6 position. This is 1,4-alpha-glucan branching enzyme GlgB from Vibrio parahaemolyticus serotype O3:K6 (strain RIMD 2210633).